A 446-amino-acid chain; its full sequence is Tubulin beta chain (446 aa).

Residues glutamine 11, glutamate 69, serine 138, glycine 142, threonine 143, glycine 144, asparagine 204, and asparagine 226 each contribute to the GTP site. Glutamate 69 contributes to the Mg(2+) binding site. Residues 427 to 446 (EAGVDEGEEFEEEEDFGDEQ) are disordered. The segment covering 429–446 (GVDEGEEFEEEEDFGDEQ) has biased composition (acidic residues).

Belongs to the tubulin family. As to quaternary structure, dimer of alpha and beta chains. A typical microtubule is a hollow water-filled tube with an outer diameter of 25 nm and an inner diameter of 15 nM. Alpha-beta heterodimers associate head-to-tail to form protofilaments running lengthwise along the microtubule wall with the beta-tubulin subunit facing the microtubule plus end conferring a structural polarity. Microtubules usually have 13 protofilaments but different protofilament numbers can be found in some organisms and specialized cells. It depends on Mg(2+) as a cofactor.

The protein resides in the cytoplasm. Its subcellular location is the cytoskeleton. Tubulin is the major constituent of microtubules, a cylinder consisting of laterally associated linear protofilaments composed of alpha- and beta-tubulin heterodimers. Microtubules grow by the addition of GTP-tubulin dimers to the microtubule end, where a stabilizing cap forms. Below the cap, tubulin dimers are in GDP-bound state, owing to GTPase activity of alpha-tubulin. This is Tubulin beta chain from Giardia intestinalis (Giardia lamblia).